A 650-amino-acid chain; its full sequence is Chaperone protein DnaK (650 aa).

A Phosphothreonine; by autocatalysis modification is found at T200.

It belongs to the heat shock protein 70 family.

Its function is as follows. Acts as a chaperone. This Burkholderia orbicola (strain MC0-3) protein is Chaperone protein DnaK.